The following is a 297-amino-acid chain: MLNGIIVIDKDKGMTSADVVYHLRRALHIRKIGHAGTLDPEVTGVLPIAIGQATKLIELMHTRPKKYQGTGLFGYATDSYDIDGKVLKEKRLVMPFTVEEIQRGMNTFKGKIEQVPPIYSAVKVNGKHLYEYAREGIKVERPKRQVEIFQYDLLNDPSFDKEKGQESFDFEITCSKGTYVRSLVNDLGEKLDEPAVMTYLRRVASSGFDISQAVKLSEIEANPEKASELIQPIDAFFKDYETIDLPEGKWLKVKNGAGISLETNAKKVALRYNEKVKAIYEKKGKIYRPSLMLLQNE.

The Nucleophile role is filled by Asp39.

It belongs to the pseudouridine synthase TruB family. Type 1 subfamily.

It carries out the reaction uridine(55) in tRNA = pseudouridine(55) in tRNA. Responsible for synthesis of pseudouridine from uracil-55 in the psi GC loop of transfer RNAs. This Lactobacillus acidophilus (strain ATCC 700396 / NCK56 / N2 / NCFM) protein is tRNA pseudouridine synthase B.